The sequence spans 508 residues: GATA zinc finger domain-containing protein 13 (508 aa).

Disordered stretches follow at residues 20–51 (YSKN…INNN) and 203–296 (MSII…PEIE). A compositionally biased stretch (low complexity) spans 23-51 (NNNNNNNNNNNNNINNNNNNNNNNNINNN). Polar residues predominate over residues 203–224 (MSIIPSDNFPTPQLPLETNTDL). The segment covering 225 to 247 (NNTSDCSSTTFSSPPSSAFNSPN) has biased composition (low complexity). Residues 248–266 (LQNDYTQPQNQKSQSSTIV) show a composition bias toward polar residues. A compositionally biased stretch (basic residues) spans 269–279 (NSSKSKSKNNK). The GATA-type zinc finger occupies 327–354 (CSICKIKCSIYWRRILINEVRTSVCNAC). The stretch at 356 to 433 (LRTMKKTKKE…NNNNNNNNNN (78 aa)) forms a coiled coil. Positions 399-482 (TTTTTTTTTS…NNNNNDNYND (84 aa)) are enriched in low complexity. Positions 399–484 (TTTTTTTTTS…NNNDNYNDSI (86 aa)) are disordered.

The sequence is that of GATA zinc finger domain-containing protein 13 (gtaM) from Dictyostelium discoideum (Social amoeba).